A 238-amino-acid polypeptide reads, in one-letter code: tRNA (guanine-N(7)-)-methyltransferase (238 aa).

Residues Glu62, Glu87, Asp119, and Asp141 each contribute to the S-adenosyl-L-methionine site. Residue Asp141 is part of the active site. Substrate contacts are provided by residues Lys145, Asp177, and Thr216–Glu219.

Belongs to the class I-like SAM-binding methyltransferase superfamily. TrmB family.

The catalysed reaction is guanosine(46) in tRNA + S-adenosyl-L-methionine = N(7)-methylguanosine(46) in tRNA + S-adenosyl-L-homocysteine. The protein operates within tRNA modification; N(7)-methylguanine-tRNA biosynthesis. In terms of biological role, catalyzes the formation of N(7)-methylguanine at position 46 (m7G46) in tRNA. This is tRNA (guanine-N(7)-)-methyltransferase from Novosphingobium aromaticivorans (strain ATCC 700278 / DSM 12444 / CCUG 56034 / CIP 105152 / NBRC 16084 / F199).